Consider the following 234-residue polypeptide: N-(5'-phosphoribosyl)anthranilate isomerase (234 aa).

The tract at residues 211 to 234 is disordered; it reads RAASSSPRPVDGESPAFQRSEKAG.

Belongs to the TrpF family.

It catalyses the reaction N-(5-phospho-beta-D-ribosyl)anthranilate = 1-(2-carboxyphenylamino)-1-deoxy-D-ribulose 5-phosphate. It participates in amino-acid biosynthesis; L-tryptophan biosynthesis; L-tryptophan from chorismate: step 3/5. This Afipia carboxidovorans (strain ATCC 49405 / DSM 1227 / KCTC 32145 / OM5) (Oligotropha carboxidovorans) protein is N-(5'-phosphoribosyl)anthranilate isomerase.